Here is a 391-residue protein sequence, read N- to C-terminus: MAAVVENVVKLLGEQYYKDAMEQCHNYNARLCAERSVRLPFLDSQTGVAQSNCYIWMEKRHRGPGLASGQLYSYPARRWRKKRRAHPPEDPRLSFPSIKPDTDQTLKKEGLISQDGSSLEALLRTDPLEKRGAPDPRVDDDSLGEFPVTNSRARKRILEPDDFLDDLDDEDYEEDTPKRRGKGKSKGKGVGSARKKLDASILEDRDKPYACDICGKRYKNRPGLSYHYAHSHLAEEEGEDKEDSQPPTPVSQRSEEQKSKKGPDGLALPNNYCDFCLGDSKINKKTGQPEELVSCSDCGRSGHPSCLQFTPVMMAAVKTYRWQCIECKCCNICGTSENDDQLLFCDDCDRGYHMYCLTPSMSEPPEGSWSCHLCLDLLKEKASIYQNQNSS.

At Ala-2 the chain carries N-acetylalanine. Glycyl lysine isopeptide (Lys-Gly) (interchain with G-Cter in SUMO2) cross-links involve residues Lys-10, Lys-99, Lys-107, and Lys-108. 2 disordered regions span residues 79–146 (WRKK…LGEF) and 165–196 (DDLD…ARKK). Basic and acidic residues-rich tracts occupy residues 100 to 110 (PDTDQTLKKEG) and 126 to 140 (DPLE…RVDD). Phosphoserine is present on Ser-142. A compositionally biased stretch (acidic residues) spans 165–174 (DDLDDEDYEE). Tyr-172 bears the Phosphotyrosine mark. Thr-176 carries the phosphothreonine modification. Residues Lys-178 and Lys-196 each participate in a glycyl lysine isopeptide (Lys-Gly) (interchain with G-Cter in SUMO2) cross-link. Ser-200 carries the phosphoserine modification. The C2H2-type zinc-finger motif lies at 209–232 (YACDICGKRYKNRPGLSYHYAHSH). Residues 233 to 266 (LAEEEGEDKEDSQPPTPVSQRSEEQKSKKGPDGL) are disordered. Residue Ser-244 is modified to Phosphoserine. Residues 253–263 (RSEEQKSKKGP) show a composition bias toward basic and acidic residues. 2 PHD-type zinc fingers span residues 270–330 (NNYC…CKCC) and 327–377 (CKCC…CLDL). A Phosphoserine modification is found at Ser-280. Lys-281 is covalently cross-linked (Glycyl lysine isopeptide (Lys-Gly) (interchain with G-Cter in SUMO2)).

It belongs to the requiem/DPF family. In terms of assembly, interacts with the nucleosomes, in particular nucleosomes bearing histone H3 crotonylated at 'Lys-14' (H3K14cr) for which DPF2 has high affinity. Also interacts (via PHD-type zinc finger domains) with histone H3 butyrylated at 'Lys-14' (H3K14bu), histone H3 propionylated at 'Lys-14' (H3K14pr), and histone H3 acetylated at 'Lys-14' (H3K14ac). Interacts with histone H3 acetylated at 'Lys-9' (H3K9ac), histone H3 di-methylated at 'Lys-9' (H3K9me2), and histone H3 tri-methylated at 'Lys-9' (H3K9me3). Interacts with histone H4 acetylated at 'Lys-12' (H4K12ac). Interacts with histone H4 acetylated at 'Lys-16' (H4K16ac). Interacts with SWI/SNF complex components. Interacts with SMARCA2, SMARCA4, SMARCB1 and SMARCD1. Interacts with SMARCC1, SMARCC2 and ACTL6A. Interacts with RUNX1. In terms of tissue distribution, ubiquitous.

It is found in the nucleus. The protein resides in the cytoplasm. Functionally, plays an active role in transcriptional regulation by binding modified histones H3 and H4. Is a negative regulator of myeloid differentiation of hematopoietic progenitor cells. Might also have a role in the development and maturation of lymphoid cells. Involved in the regulation of non-canonical NF-kappa-B pathway. This is Zinc finger protein ubi-d4 (DPF2) from Homo sapiens (Human).